Reading from the N-terminus, the 717-residue chain is Fatty acid oxidation complex subunit alpha (717 aa).

Positions 1–190 are enoyl-CoA hydratase; it reads MESTSAFNLQ…KAGLVDDVVP (190 aa). The segment at 306–717 is 3-hydroxyacyl-CoA dehydrogenase; that stretch reads RALHSVGVLG…AGNLQAEMTV (412 aa).

In the N-terminal section; belongs to the enoyl-CoA hydratase/isomerase family. The protein in the central section; belongs to the 3-hydroxyacyl-CoA dehydrogenase family. Heterotetramer of two alpha chains (FadJ) and two beta chains (FadI).

It is found in the cytoplasm. It catalyses the reaction a (3S)-3-hydroxyacyl-CoA = a (2E)-enoyl-CoA + H2O. It carries out the reaction a 4-saturated-(3S)-3-hydroxyacyl-CoA = a (3E)-enoyl-CoA + H2O. The enzyme catalyses a (3S)-3-hydroxyacyl-CoA + NAD(+) = a 3-oxoacyl-CoA + NADH + H(+). The catalysed reaction is (3S)-3-hydroxybutanoyl-CoA = (3R)-3-hydroxybutanoyl-CoA. It functions in the pathway lipid metabolism; fatty acid beta-oxidation. In terms of biological role, catalyzes the formation of a hydroxyacyl-CoA by addition of water on enoyl-CoA. Also exhibits 3-hydroxyacyl-CoA epimerase and 3-hydroxyacyl-CoA dehydrogenase activities. The chain is Fatty acid oxidation complex subunit alpha from Cronobacter sakazakii (strain ATCC BAA-894) (Enterobacter sakazakii).